The primary structure comprises 300 residues: 33 kDa chaperonin (300 aa).

2 cysteine pairs are disulfide-bonded: cysteine 235–cysteine 237 and cysteine 269–cysteine 272.

The protein belongs to the HSP33 family. Post-translationally, under oxidizing conditions two disulfide bonds are formed involving the reactive cysteines. Under reducing conditions zinc is bound to the reactive cysteines and the protein is inactive.

It localises to the cytoplasm. Functionally, redox regulated molecular chaperone. Protects both thermally unfolding and oxidatively damaged proteins from irreversible aggregation. Plays an important role in the bacterial defense system toward oxidative stress. This Pseudomonas fluorescens (strain SBW25) protein is 33 kDa chaperonin.